Reading from the N-terminus, the 226-residue chain is uncharacterized protein (226 aa).

One can recognise an N-acetyltransferase domain in the interval 75-226 (YTIRNVTKDD…KGWLRMVKRI (152 aa)).

This sequence belongs to the acetyltransferase family.

This is an uncharacterized protein from Methanocaldococcus jannaschii (strain ATCC 43067 / DSM 2661 / JAL-1 / JCM 10045 / NBRC 100440) (Methanococcus jannaschii).